The chain runs to 549 residues: MAVPPRGRGIDPARTNPDTFPPSGARCMEPSPERPACSQQEPTLGMDAMASEHRDVLVLLPSREQLRLAVGVKATGRELFQQVCNVASIRDAQFFGLCVVRNNEYIFMDLEQKLSKYFSKDWKKERNEGNEKPRAPFVAFLRVQHYVENGRVISDHRARHLYYCHLKERVLRSQCAHREEAYFLLAACALQADLGEHRESAHAGRYFEPHSYFPQWIITKRGIDYILRHMPTLHRERQGLSPKEAMLCFIQEACRLEDVPVHFFRLHKDKKEGRPTVILGLALRGVHIYQGKKLEIQLDGLPAAQKLVYYTGCTWRSRHLLHLLRASHQLHLRVRPTLQQLRQREEAEEKQHYRESYISDELELDLASRSFPGSGVSSQHCPHCLSRHSADSHGSSYTSGIKANSWLRESREMSVDVPLEVHGLHEKEPSSSPRTSRSHPSTRGDSQATRQEPCTQVRTRGQSAEAVHQIQEMTAGVSEEQHSHGLDDMQLHQLALHPAPTSLSHTFHRALDCRLAGPCETRATLPSKRSSNCLALDLFGEAPPQEFVV.

The tract at residues 1–40 (MAVPPRGRGIDPARTNPDTFPPSGARCMEPSPERPACSQQ) is disordered. An FERM domain is found at 54–369 (RDVLVLLPSR…DELELDLASR (316 aa)). Disordered stretches follow at residues 377–400 (SSQHCPHCLSRHSADSHGSSYTSG) and 422–464 (HGLH…GQSA). The segment covering 430–443 (SSSPRTSRSHPSTR) has biased composition (low complexity). Over residues 444–462 (GDSQATRQEPCTQVRTRGQ) the composition is skewed to polar residues.

This chain is FERM domain-containing protein 1 (FRMD1), found in Homo sapiens (Human).